A 332-amino-acid chain; its full sequence is Junctional sarcoplasmic reticulum protein 1 (332 aa).

The segment at 1 to 80 (MTTRGLEDLD…EKELAGKEST (80 aa)) is mediates interaction with CACNA1S. 2 disordered regions span residues 1–125 (MTTR…PWGD) and 159–332 (APHP…KGRD). Threonine 51 is modified (phosphothreonine). A compositionally biased stretch (basic and acidic residues) spans 66–76 (GLKKMEKELAG). 2 stretches are compositionally biased toward pro residues: residues 98–116 (QAPP…PPRT) and 177–197 (APKP…PGPP). Over residues 221–232 (GGSISEASGEES) the composition is skewed to low complexity. A phosphoserine mark is found at serine 223 and serine 228. Basic and acidic residues-rich tracts occupy residues 239–256 (GSQE…EKLK) and 283–307 (RRWE…EHGK).

Interacts with CACNA1S, CACNB1 and calsequestrin. Specifically expressed in skeletal muscle. Detected in skeletal muscle and tongue (at protein level).

The protein resides in the sarcoplasmic reticulum membrane. It is found in the endoplasmic reticulum membrane. Involved in skeletal muscle excitation/contraction coupling (EC), probably acting as a regulator of the voltage-sensitive calcium channel CACNA1S. EC is a physiological process whereby an electrical signal (depolarization of the plasma membrane) is converted into a chemical signal, a calcium gradient, by the opening of ryanodine receptor calcium release channels. May regulate CACNA1S membrane targeting and activity. The protein is Junctional sarcoplasmic reticulum protein 1 (Jsrp1) of Mus musculus (Mouse).